The following is a 1563-amino-acid chain: Integrator complex subunit 5-like protein (1563 aa).

Basic and acidic residues-rich tracts occupy residues 1-21 (MKEEETIEISEKEKDKERNDN) and 31-44 (EDWRNEETATKNEN). Disordered regions lie at residues 1–63 (MKEE…YDDD), 102–208 (KKSK…NITY), and 270–310 (NSLN…QQNP). Residues 52-63 (GDSDDDDYYDDD) show a composition bias toward acidic residues. Low complexity-rich tracts occupy residues 109–133 (TAATTTTTTTTTTTTTTTTTPTATA) and 141–202 (NNLL…NNNN). The helical transmembrane segment at 350 to 370 (DSIINWSLSTLTIITRLLIIL) threads the bilayer. The span at 381–398 (QQQQQQQQQQQQQQQQQQ) shows a compositional bias: low complexity. Disordered regions lie at residues 381-417 (QQQQQQQQQQQQQQQQQQTKNKTQFPPPPPPPLRQPI), 466-498 (SKSSSSSSSSSSSSSSSSSSSSSSSSSSSSSKT), 637-694 (FDNN…DNSS), and 784-828 (ILNN…SQEI). The segment covering 405–414 (FPPPPPPPLR) has biased composition (pro residues). Low complexity-rich tracts occupy residues 468 to 496 (SSSSSSSSSSSSSSSSSSSSSSSSSSSSS), 639 to 686 (NNNN…NNNN), and 786 to 824 (NNNNNNNNNNNNNNNNNNNNNNNNNNNNNNNNNQQQQQQ). The helical transmembrane segment at 877–897 (IIIKLISLIGMDSIYSSLIIL) threads the bilayer. 2 disordered regions span residues 1154–1173 (SGNFGNGDDDDDEYGDDEYG) and 1268–1303 (KQRMKKKKQSIQQNGNINNEQQQEEDDNDDADDQNE). Residues 1160–1172 (GDDDDDEYGDDEY) show a composition bias toward acidic residues. Residues 1277–1288 (SIQQNGNINNEQ) show a composition bias toward low complexity. The segment covering 1289 to 1303 (QQEEDDNDDADDQNE) has biased composition (acidic residues).

It belongs to the Integrator subunit 5 family. In terms of assembly, component of the Integrator complex. The core complex associates with protein phosphatase 2A subunits, to form the Integrator-PP2A (INTAC) complex.

It is found in the nucleus. It localises to the cytoplasm. The protein resides in the nucleus membrane. In terms of biological role, component of the integrator complex, a multiprotein complex that terminates RNA polymerase II (Pol II) transcription in the promoter-proximal region of genes. The integrator complex provides a quality checkpoint during transcription elongation by driving premature transcription termination of transcripts that are unfavorably configured for transcriptional elongation: the complex terminates transcription by (1) catalyzing dephosphorylation of the C-terminal domain (CTD) of Pol II subunit polr2a, (2) degrading the exiting nascent RNA transcript via endonuclease activity and (3) promoting the release of Pol II from bound DNA. The integrator complex is also involved in terminating the synthesis of non-coding Pol II transcripts, such as enhancer RNAs (eRNAs), small nuclear RNAs (snRNAs), telomerase RNAs and long non-coding RNAs (lncRNAs). This is Integrator complex subunit 5-like protein from Dictyostelium discoideum (Social amoeba).